The following is a 184-amino-acid chain: C-phycoerythrin class 1 subunit beta (184 aa).

C50 and C61 together coordinate (2R,3E)-phycoerythrobilin. The residue at position 72 (N72) is an N4-methylasparagine. C82 and C165 together coordinate (2R,3E)-phycoerythrobilin.

This sequence belongs to the phycobiliprotein family. As to quaternary structure, heterodimer of an alpha and a beta chain. Post-translationally, contains three covalently linked bilin chromophores.

The protein resides in the cellular thylakoid membrane. Light-harvesting photosynthetic bile pigment-protein from the phycobiliprotein complex. This chain is C-phycoerythrin class 1 subunit beta (cpeB), found in Synechococcus sp. (strain WH7803).